The sequence spans 143 residues: Acyl carrier protein 3, chloroplastic (143 aa).

The transit peptide at 1 to 60 directs the protein to the chloroplast; the sequence is MATAAAGSSLICIKSASCSLNRAQVPSGLSSLRSVSLPISGKIFPSLRSSRGPLSFRVCC. A Carrier domain is found at 64–139; it reads QETVTRVCEI…DAADLIEKLV (76 aa). S99 is modified (O-(pantetheine 4'-phosphoryl)serine).

This sequence belongs to the acyl carrier protein (ACP) family. 4'-phosphopantetheine is transferred from CoA to a specific serine of apo-ACP by acpS. This modification is essential for activity because fatty acids are bound in thioester linkage to the sulfhydryl of the prosthetic group.

The protein localises to the plastid. It is found in the chloroplast. It participates in lipid metabolism; fatty acid biosynthesis. Functionally, carrier of the growing fatty acid chain in fatty acid biosynthesis. This Cuphea lanceolata (Cigar flower) protein is Acyl carrier protein 3, chloroplastic (ACL1.3).